Reading from the N-terminus, the 480-residue chain is Dihydrolipoyllysine-residue acetyltransferase component 4 of pyruvate dehydrogenase complex, chloroplastic (480 aa).

The transit peptide at 1 to 53 directs the protein to the chloroplast; it reads MAVSSSSFLSTASLTNSKSNISFASSVSPSLRSVVFRSTTPATSHRRSMTVRS. Residues 55 to 133 form the Lipoyl-binding domain; that stretch reads IREIFMPALS…AAIGLLAETE (79 aa). Lys-96 is modified (N6-lipoyllysine). Disordered regions lie at residues 140 to 168 and 224 to 245; these read KSKAASKSSSSVAEAVVPSPPPVTSSPAP and AGIAPSKSSIAPPPPPPPPVTA. A compositionally biased stretch (low complexity) spans 142-156; the sequence is KAASKSSSSVAEAVV. In terms of domain architecture, Peripheral subunit-binding (PSBD) spans 187 to 224; that stretch reads VATPYAKKLAKQHKVDIESVAGTGPFGRITASDVETAA. Over residues 234 to 243 the composition is skewed to pro residues; the sequence is APPPPPPPPV. Residue His-453 is part of the active site.

The protein belongs to the 2-oxoacid dehydrogenase family. (R)-lipoate is required as a cofactor.

It localises to the plastid. The protein resides in the chloroplast stroma. The enzyme catalyses N(6)-[(R)-dihydrolipoyl]-L-lysyl-[protein] + acetyl-CoA = N(6)-[(R)-S(8)-acetyldihydrolipoyl]-L-lysyl-[protein] + CoA. Its function is as follows. The pyruvate dehydrogenase complex catalyzes the overall conversion of pyruvate to acetyl-CoA and CO(2). It contains multiple copies of three enzymatic components: pyruvate dehydrogenase (E1), dihydrolipoamide acetyltransferase (E2) and lipoamide dehydrogenase (E3). The protein is Dihydrolipoyllysine-residue acetyltransferase component 4 of pyruvate dehydrogenase complex, chloroplastic (LTA2) of Arabidopsis thaliana (Mouse-ear cress).